The primary structure comprises 614 residues: Glutamyl-tRNA(Gln) amidotransferase subunit E (614 aa).

It belongs to the GatB/GatE family. GatE subfamily. As to quaternary structure, heterodimer of GatD and GatE.

The catalysed reaction is L-glutamyl-tRNA(Gln) + L-glutamine + ATP + H2O = L-glutaminyl-tRNA(Gln) + L-glutamate + ADP + phosphate + H(+). Its function is as follows. Allows the formation of correctly charged Gln-tRNA(Gln) through the transamidation of misacylated Glu-tRNA(Gln) in organisms which lack glutaminyl-tRNA synthetase. The reaction takes place in the presence of glutamine and ATP through an activated gamma-phospho-Glu-tRNA(Gln). The GatDE system is specific for glutamate and does not act on aspartate. The sequence is that of Glutamyl-tRNA(Gln) amidotransferase subunit E from Methanospirillum hungatei JF-1 (strain ATCC 27890 / DSM 864 / NBRC 100397 / JF-1).